A 408-amino-acid chain; its full sequence is Centromere protein U (408 aa).

Positions 1–33 are enriched in basic residues; it reads DRPRPARLSHARFSKNHSGRTHSMKDKAGRKHR. The tract at residues 1-218 is disordered; it reads DRPRPARLSH…GKRKKPRSYT (218 aa). Thr72 is subject to Phosphothreonine; by PLK1. Thr92 is modified (phosphothreonine). Basic and acidic residues predominate over residues 94–103; the sequence is QEKEAKRSSD. At Ser102 the chain carries Phosphoserine. At Thr104 the chain carries Phosphothreonine. Ser105, Ser110, and Ser114 each carry phosphoserine. Positions 118 to 127 are enriched in basic residues; it reads SAKKPRRKLK. 3 positions are modified to phosphoserine: Ser130, Ser133, and Ser135. The segment covering 176–186 has biased composition (polar residues); it reads PQKTGPQSAES. Residue Lys178 forms a Glycyl lysine isopeptide (Lys-Gly) (interchain with G-Cter in SUMO2) linkage. Residues Ser183 and Ser187 each carry the phosphoserine modification. Phosphothreonine is present on Thr192. At Ser222 the chain carries Phosphoserine. Residues 273–350 adopt a coiled-coil conformation; sequence SNLKEELIKM…LRKAAYFLSN (78 aa). Positions 293-310 match the Nuclear localization signal motif; the sequence is KRKNAKIISNIEKKRQRL.

Belongs to the CENP-U/AME1 family. In terms of assembly, component of the CENPA-NAC complex, at least composed of CENPA, CENPC, CENPH, CENPM, CENPN, CENPT and CENPU. The CENPA-NAC complex interacts with the CENPA-CAD complex, composed of CENPI, CENPK, CENPL, CENPO, CENPP, CENPQ, CENPR and CENPS. Interacts with MLF1. In terms of processing, phosphorylated by PLK1 at Thr-72, creating a self-tethering site that specifically interacts with the polo-box domain of PLK1.

It is found in the cytoplasm. Its subcellular location is the nucleus. It localises to the chromosome. The protein localises to the centromere. The protein resides in the kinetochore. Its function is as follows. Component of the CENPA-NAC (nucleosome-associated) complex, a complex that plays a central role in assembly of kinetochore proteins, mitotic progression and chromosome segregation. The CENPA-NAC complex recruits the CENPA-CAD (nucleosome distal) complex and may be involved in incorporation of newly synthesized CENPA into centromeres. Plays an important role in the correct PLK1 localization to the mitotic kinetochores. A scaffold protein responsible for the initial recruitment and maintenance of the kinetochore PLK1 population until its degradation. Involved in transcriptional repression. This chain is Centromere protein U (CENPU), found in Bos taurus (Bovine).